The primary structure comprises 815 residues: Leucine--tRNA ligase (815 aa).

Positions 42–52 (PYPSGRLHMGH) match the 'HIGH' region motif. Positions 574-578 (KMSKS) match the 'KMSKS' region motif. An ATP-binding site is contributed by Lys577.

The protein belongs to the class-I aminoacyl-tRNA synthetase family.

Its subcellular location is the cytoplasm. The catalysed reaction is tRNA(Leu) + L-leucine + ATP = L-leucyl-tRNA(Leu) + AMP + diphosphate. This chain is Leucine--tRNA ligase, found in Marinomonas sp. (strain MWYL1).